The primary structure comprises 691 residues: Elongation factor G (691 aa).

The tr-type G domain maps to 8–282; the sequence is ERVRNIGIAA…AVVDYLPAPV (275 aa). GTP-binding positions include 17–24, 81–85, and 135–138; these read AHIDAGKT, DTPGH, and NKMD.

This sequence belongs to the TRAFAC class translation factor GTPase superfamily. Classic translation factor GTPase family. EF-G/EF-2 subfamily.

It is found in the cytoplasm. In terms of biological role, catalyzes the GTP-dependent ribosomal translocation step during translation elongation. During this step, the ribosome changes from the pre-translocational (PRE) to the post-translocational (POST) state as the newly formed A-site-bound peptidyl-tRNA and P-site-bound deacylated tRNA move to the P and E sites, respectively. Catalyzes the coordinated movement of the two tRNA molecules, the mRNA and conformational changes in the ribosome. This is Elongation factor G from Prochlorococcus marinus (strain MIT 9515).